Reading from the N-terminus, the 220-residue chain is Deoxyribose-phosphate aldolase 1 (220 aa).

The Proton donor/acceptor role is filled by Asp-89. Lys-151 serves as the catalytic Schiff-base intermediate with acetaldehyde. Lys-180 acts as the Proton donor/acceptor in catalysis.

This sequence belongs to the DeoC/FbaB aldolase family. DeoC type 1 subfamily.

The protein resides in the cytoplasm. The catalysed reaction is 2-deoxy-D-ribose 5-phosphate = D-glyceraldehyde 3-phosphate + acetaldehyde. Its pathway is carbohydrate degradation; 2-deoxy-D-ribose 1-phosphate degradation; D-glyceraldehyde 3-phosphate and acetaldehyde from 2-deoxy-alpha-D-ribose 1-phosphate: step 2/2. Functionally, catalyzes a reversible aldol reaction between acetaldehyde and D-glyceraldehyde 3-phosphate to generate 2-deoxy-D-ribose 5-phosphate. The polypeptide is Deoxyribose-phosphate aldolase 1 (Staphylococcus aureus (strain COL)).